The chain runs to 831 residues: SID1 transmembrane family member 1 (831 aa).

The signal sequence occupies residues 1 to 19 (MLDCPRLALLCALPWLLRA). At 20-308 (AVPGHRAEPL…SVKGSVYVKS (289 aa)) the chain is on the extracellular side. Asn67, Asn83, Asn136, and Asn281 each carry an N-linked (GlcNAc...) asparagine glycan. A helical membrane pass occupies residues 309–329 (SLFSVFVFLSFYLGCLLVVFV). Residues 330–441 (HHMRFQRKPV…DRRIVSKKYK (112 aa)) lie on the Cytoplasmic side of the membrane. Positions 354–408 (VSHPITASTPEGSNYGAIDESSSSPGRQMSSSDGGQPCHSDTDSSVEESDFDTMP) are disordered. Over residues 374-385 (SSSSPGRQMSSS) the composition is skewed to low complexity. Residues 397 to 408 (SSVEESDFDTMP) show a composition bias toward acidic residues. The helical transmembrane segment at 442–462 (IYFWNIITIAVFYALPVMQLV) threads the bilayer. Residues 463–493 (ITYQTVVNVTGNQDICYYNFLCAHPLGVLSA) lie on the Extracellular side of the membrane. Asn470 carries N-linked (GlcNAc...) asparagine glycosylation. A helical membrane pass occupies residues 494–514 (FNNILSNLGHVLLGFLFLLIV). At 515 to 540 (LRRDLLHRRALEAKDIFAMEYGIPKH) the chain is on the cytoplasmic side. The chain crosses the membrane as a helical span at residues 541–561 (FGLFYAMGIALMMEGVLSACY). The Extracellular portion of the chain corresponds to 562–571 (HVCPNYSNFQ). The N-linked (GlcNAc...) asparagine glycan is linked to Asn566. The chain crosses the membrane as a helical span at residues 572–589 (FDTSFMYMIAGLCMLKLY). Residues 590 to 599 (QTRHPDINAS) lie on the Cytoplasmic side of the membrane. A helical membrane pass occupies residues 600 to 620 (AYSAYASFAVVITLTVLGVVF). The Extracellular segment spans residues 621 to 625 (GKNDV). Residues 626–646 (WFWIIFSAIHVLASLALSTQI) traverse the membrane as a helical segment. Over 647–687 (YYMGRFKIDVSDTDLGIFRRAAMVFYTDCIQQCSRPLYMDR) the chain is Cytoplasmic. Residues 688-708 (MVLLIVGNLVNWSFALFGLIY) traverse the membrane as a helical segment. Over 709–714 (RPRDFA) the chain is Extracellular. A helical membrane pass occupies residues 715–735 (SYMLGIFICNLLLYLAFYIIM). Residues 736–745 (KLRSSEKVLP) lie on the Cytoplasmic side of the membrane. Residues 746–766 (LPVFCIVATAVVWAAALYFFF) form a helical membrane-spanning segment. The Extracellular segment spans residues 767-795 (QNLSSWEGTPAESREKNRECVLLGFFDDH). N-linked (GlcNAc...) asparagine glycosylation occurs at Asn768. A helical transmembrane segment spans residues 796-816 (DIWHFLSATALFFSFLVLLTL). Over 817-831 (DDDLDVVRRDQIPVF) the chain is Cytoplasmic.

Belongs to the SID1 family.

It is found in the membrane. Functionally, in vitro binds long double-stranded RNA (dsRNA) (500 and 700 base pairs), but not dsRNA shorter than 300 bp. Not involved in RNA autophagy, a process in which RNA is directly imported into lysosomes in an ATP-dependent manner, and degraded. This Rattus norvegicus (Rat) protein is SID1 transmembrane family member 1 (Sidt1).